A 190-amino-acid chain; its full sequence is Peptidyl-tRNA hydrolase (190 aa).

Position 18 (Tyr-18) interacts with tRNA. The active-site Proton acceptor is His-23. TRNA-binding residues include Tyr-69, Asn-71, and Asn-117.

Belongs to the PTH family. In terms of assembly, monomer.

Its subcellular location is the cytoplasm. The enzyme catalyses an N-acyl-L-alpha-aminoacyl-tRNA + H2O = an N-acyl-L-amino acid + a tRNA + H(+). In terms of biological role, hydrolyzes ribosome-free peptidyl-tRNAs (with 1 or more amino acids incorporated), which drop off the ribosome during protein synthesis, or as a result of ribosome stalling. Its function is as follows. Catalyzes the release of premature peptidyl moieties from peptidyl-tRNA molecules trapped in stalled 50S ribosomal subunits, and thus maintains levels of free tRNAs and 50S ribosomes. The polypeptide is Peptidyl-tRNA hydrolase (Rhodococcus erythropolis (strain PR4 / NBRC 100887)).